A 462-amino-acid chain; its full sequence is Cysteine--tRNA ligase (462 aa).

Position 30 (cysteine 30) interacts with Zn(2+). Residues 32-42 (PTVYDRAHLGN) carry the 'HIGH' region motif. Residues cysteine 221, histidine 246, and glutamate 250 each contribute to the Zn(2+) site. Positions 279–283 (KMSKS) match the 'KMSKS' region motif. Lysine 282 contributes to the ATP binding site.

It belongs to the class-I aminoacyl-tRNA synthetase family. Monomer. Zn(2+) is required as a cofactor.

It localises to the cytoplasm. The catalysed reaction is tRNA(Cys) + L-cysteine + ATP = L-cysteinyl-tRNA(Cys) + AMP + diphosphate. The protein is Cysteine--tRNA ligase of Paracoccus denitrificans (strain Pd 1222).